We begin with the raw amino-acid sequence, 540 residues long: CTP synthase (540 aa).

Residues Met-1 to Lys-264 form an amidoligase domain region. CTP is bound at residue Ser-12. Residue Ser-12 coordinates UTP. Gly-13–Thr-18 contributes to the ATP binding site. Tyr-53 contacts L-glutamine. Asp-70 is a binding site for ATP. Mg(2+)-binding residues include Asp-70 and Glu-140. Residues Asp-147–Glu-149, Lys-185–Gln-190, and Arg-221 contribute to the CTP site. Residues Lys-185 to Gln-190 and Arg-221 contribute to the UTP site. The region spanning Tyr-294 to Asn-527 is the Glutamine amidotransferase type-1 domain. Gly-347 serves as a coordination point for L-glutamine. Cys-374 acts as the Nucleophile; for glutamine hydrolysis in catalysis. Residues Leu-375–Gln-378, Glu-398, and Arg-455 each bind L-glutamine. Catalysis depends on residues His-500 and Glu-502.

The protein belongs to the CTP synthase family. As to quaternary structure, homotetramer.

It carries out the reaction UTP + L-glutamine + ATP + H2O = CTP + L-glutamate + ADP + phosphate + 2 H(+). The enzyme catalyses L-glutamine + H2O = L-glutamate + NH4(+). The catalysed reaction is UTP + NH4(+) + ATP = CTP + ADP + phosphate + 2 H(+). It participates in pyrimidine metabolism; CTP biosynthesis via de novo pathway; CTP from UDP: step 2/2. Its activity is regulated as follows. Allosterically activated by GTP, when glutamine is the substrate; GTP has no effect on the reaction when ammonia is the substrate. The allosteric effector GTP functions by stabilizing the protein conformation that binds the tetrahedral intermediate(s) formed during glutamine hydrolysis. Inhibited by the product CTP, via allosteric rather than competitive inhibition. Its function is as follows. Catalyzes the ATP-dependent amination of UTP to CTP with either L-glutamine or ammonia as the source of nitrogen. Regulates intracellular CTP levels through interactions with the four ribonucleotide triphosphates. The polypeptide is CTP synthase (Thermoplasma volcanium (strain ATCC 51530 / DSM 4299 / JCM 9571 / NBRC 15438 / GSS1)).